We begin with the raw amino-acid sequence, 319 residues long: Acetyl esterase (319 aa).

An Involved in the stabilization of the negatively charged intermediate by the formation of the oxyanion hole motif is present at residues 91 to 93 (HGG). Active-site residues include Ser165, Asp262, and His292.

It belongs to the 'GDXG' lipolytic enzyme family. As to quaternary structure, homodimer. Interacts with MalT and MelA.

It localises to the cytoplasm. Displays esterase activity towards short chain fatty esters (acyl chain length of up to 8 carbons). Able to hydrolyze triacetylglycerol (triacetin) and tributyrylglycerol (tributyrin), but not trioleylglycerol (triolein) or cholesterol oleate. Negatively regulates MalT activity by antagonizing maltotriose binding. Inhibits MelA galactosidase activity. This chain is Acetyl esterase, found in Shigella boydii serotype 18 (strain CDC 3083-94 / BS512).